A 516-amino-acid chain; its full sequence is D-alanine--D-alanyl carrier protein ligase (516 aa).

Position 156 to 157 (156 to 157 (TS)) interacts with ATP. Position 203 (Asp203) interacts with D-alanine. Residue 298–303 (NAYGPT) participates in ATP binding. A D-alanine-binding site is contributed by Val307. ATP is bound by residues Asp389, 401–404 (YGGR), and Lys503. Lys503 lines the D-alanine pocket.

Belongs to the ATP-dependent AMP-binding enzyme family. DltA subfamily.

The protein resides in the cytoplasm. It carries out the reaction holo-[D-alanyl-carrier protein] + D-alanine + ATP = D-alanyl-[D-alanyl-carrier protein] + AMP + diphosphate. The protein operates within cell wall biogenesis; lipoteichoic acid biosynthesis. In terms of biological role, catalyzes the first step in the D-alanylation of lipoteichoic acid (LTA), the activation of D-alanine and its transfer onto the D-alanyl carrier protein (Dcp) DltC. In an ATP-dependent two-step reaction, forms a high energy D-alanyl-AMP intermediate, followed by transfer of the D-alanyl residue as a thiol ester to the phosphopantheinyl prosthetic group of the Dcp. D-alanylation of LTA plays an important role in modulating the properties of the cell wall in Gram-positive bacteria, influencing the net charge of the cell wall. The sequence is that of D-alanine--D-alanyl carrier protein ligase from Streptococcus pneumoniae serotype 4 (strain ATCC BAA-334 / TIGR4).